A 269-amino-acid polypeptide reads, in one-letter code: Glutamate racemase (269 aa).

Substrate contacts are provided by residues 14–15 and 46–47; these read DS and YS. The active-site Proton donor/acceptor is cysteine 78. 79–80 is a substrate binding site; the sequence is NT. Cysteine 189 (proton donor/acceptor) is an active-site residue. Residue 190-191 coordinates substrate; that stretch reads TH.

Belongs to the aspartate/glutamate racemases family.

The enzyme catalyses L-glutamate = D-glutamate. It functions in the pathway cell wall biogenesis; peptidoglycan biosynthesis. In terms of biological role, provides the (R)-glutamate required for cell wall biosynthesis. The chain is Glutamate racemase from Haemophilus influenzae (strain PittGG).